A 292-amino-acid polypeptide reads, in one-letter code: tRNA pseudouridine synthase B (292 aa).

The active-site Nucleophile is D38.

It belongs to the pseudouridine synthase TruB family. Type 1 subfamily.

The catalysed reaction is uridine(55) in tRNA = pseudouridine(55) in tRNA. Responsible for synthesis of pseudouridine from uracil-55 in the psi GC loop of transfer RNAs. In Gloeobacter violaceus (strain ATCC 29082 / PCC 7421), this protein is tRNA pseudouridine synthase B.